The following is a 115-amino-acid chain: Pro-FMRFamide-related neuropeptide FF (115 aa).

The signal sequence occupies residues 1–22 (MDARQAAALLLVLLLVTDWSHA). Disordered regions lie at residues 20–51 (SHAE…AQTP) and 78–102 (FGRN…LSSP). A propeptide spanning residues 23–66 (EGPGGRDGGDQIFMEEDSGAHPAQDAQTPRSLLRSLLQAMQRPG) is cleaved from the precursor. Phenylalanine 78 bears the Phenylalanine amide mark. Positions 81–94 (NTRGSWSNKRLSPR) are excised as a propeptide. Position 112 is a phenylalanine amide (phenylalanine 112).

Belongs to the FARP (FMRFamide related peptide) family.

It localises to the secreted. In terms of biological role, morphine modulating peptides. Have wide-ranging physiologic effects, including the modulation of morphine-induced analgesia, elevation of arterial blood pressure, and increased somatostatin secretion from the pancreas. The neuropeptide FF potentiates and sensitizes ASIC3 cation channel. This chain is Pro-FMRFamide-related neuropeptide FF (NPFF), found in Bos taurus (Bovine).